A 501-amino-acid chain; its full sequence is Aldehyde dehydrogenase 1A1 (501 aa).

N-acetylserine is present on S2. K91 and K128 each carry N6-acetyllysine. NAD(+) contacts are provided by residues 167–170, 193–196, 226–227, and 246–247; these read IPWN, KPAE, GP, and GS. K252 is modified (N6-acetyllysine). E269 functions as the Proton acceptor in the catalytic mechanism. 269–271 contacts NAD(+); it reads ELG. Residue C303 is the Nucleophile of the active site. The segment at 336 to 501 is mediates interaction with PRMT3; that stretch reads LNSGINQGPQ…VAIKISQKNS (166 aa). Residue 349–353 coordinates NAD(+); sequence EQHDK. N6-acetyllysine occurs at positions 353 and 367. An NAD(+)-binding site is contributed by 400–402; that stretch reads EIF. K410 carries the post-translational modification N6-acetyllysine. S413 is modified (phosphoserine). Residues K419, K435, and K495 each carry the N6-acetyllysine modification.

It belongs to the aldehyde dehydrogenase family. As to quaternary structure, homotetramer. Interacts with PRMT3; the interaction is direct, inhibits ALDH1A1 aldehyde dehydrogenase activity and is independent of the methyltransferase activity of PRMT3. Post-translationally, the N-terminus is blocked most probably by acetylation.

The protein localises to the cytoplasm. It localises to the cytosol. The protein resides in the cell projection. Its subcellular location is the axon. It catalyses the reaction an aldehyde + NAD(+) + H2O = a carboxylate + NADH + 2 H(+). It carries out the reaction all-trans-retinal + NAD(+) + H2O = all-trans-retinoate + NADH + 2 H(+). The catalysed reaction is 9-cis-retinal + NAD(+) + H2O = 9-cis-retinoate + NADH + 2 H(+). The enzyme catalyses 11-cis-retinal + NAD(+) + H2O = 11-cis-retinoate + NADH + 2 H(+). It catalyses the reaction 13-cis-retinal + NAD(+) + H2O = 13-cis-retinoate + NADH + 2 H(+). It carries out the reaction 3-deoxyglucosone + NAD(+) + H2O = 2-dehydro-3-deoxy-D-gluconate + NADH + 2 H(+). The catalysed reaction is (E)-4-hydroxynon-2-enal + NAD(+) + H2O = (E)-4-hydroxynon-2-enoate + NADH + 2 H(+). The enzyme catalyses malonaldehyde + NAD(+) + H2O = 3-oxopropanoate + NADH + 2 H(+). It catalyses the reaction hexanal + NAD(+) + H2O = hexanoate + NADH + 2 H(+). It carries out the reaction propanal + NAD(+) + H2O = propanoate + NADH + 2 H(+). The catalysed reaction is acetaldehyde + NAD(+) + H2O = acetate + NADH + 2 H(+). The enzyme catalyses benzaldehyde + NAD(+) + H2O = benzoate + NADH + 2 H(+). It catalyses the reaction 4-aminobutanal + NAD(+) + H2O = 4-aminobutanoate + NADH + 2 H(+). Its pathway is cofactor metabolism; retinol metabolism. In terms of biological role, cytosolic dehydrogenase that catalyzes the irreversible oxidation of a wide range of aldehydes to their corresponding carboxylic acid. Functions downstream of retinol dehydrogenases and catalyzes the oxidation of retinaldehyde into retinoic acid, the second step in the oxidation of retinol/vitamin A into retinoic acid. This pathway is crucial to control the levels of retinol and retinoic acid, two important molecules which excess can be teratogenic and cytotoxic. Also oxidizes aldehydes resulting from lipid peroxidation like (E)-4-hydroxynon-2-enal/HNE, malonaldehyde and hexanal that form protein adducts and are highly cytotoxic. By participating for instance to the clearance of (E)-4-hydroxynon-2-enal/HNE in the lens epithelium prevents the formation of HNE-protein adducts and lens opacification. Also functions downstream of fructosamine-3-kinase in the fructosamine degradation pathway by catalyzing the oxidation of 3-deoxyglucosone, the carbohydrate product of fructosamine 3-phosphate decomposition, which is itself a potent glycating agent that may react with lysine and arginine side-chains of proteins. Also has an aminobutyraldehyde dehydrogenase activity and is probably part of an alternative pathway for the biosynthesis of GABA/4-aminobutanoate in midbrain, thereby playing a role in GABAergic synaptic transmission. In Mesocricetus auratus (Golden hamster), this protein is Aldehyde dehydrogenase 1A1.